The following is a 181-amino-acid chain: Oligoribonuclease (181 aa).

Residues 8 to 171 (LVWIDMEMTG…DDIRESIAEL (164 aa)) enclose the Exonuclease domain. Residue Tyr129 is part of the active site.

It belongs to the oligoribonuclease family.

The protein localises to the cytoplasm. In terms of biological role, 3'-to-5' exoribonuclease specific for small oligoribonucleotides. This chain is Oligoribonuclease, found in Pseudoalteromonas atlantica (strain T6c / ATCC BAA-1087).